Reading from the N-terminus, the 133-residue chain is Nodulation protein K (133 aa).

The chain is Nodulation protein K (nodK) from Bradyrhizobium elkanii.